The sequence spans 295 residues: Probable deoxyhypusine synthase (295 aa).

The Nucleophile role is filled by K267.

Belongs to the deoxyhypusine synthase family. It depends on NAD(+) as a cofactor.

The catalysed reaction is [eIF5A protein]-L-lysine + spermidine = [eIF5A protein]-deoxyhypusine + propane-1,3-diamine. Its pathway is protein modification; eIF5A hypusination. Functionally, catalyzes the NAD-dependent oxidative cleavage of spermidine and the subsequent transfer of the butylamine moiety of spermidine to the epsilon-amino group of a specific lysine residue of the eIF-5A precursor protein to form the intermediate deoxyhypusine residue. The polypeptide is Probable deoxyhypusine synthase (Pyrobaculum calidifontis (strain DSM 21063 / JCM 11548 / VA1)).